Here is a 94-residue protein sequence, read N- to C-terminus: Preprofallaxidin-9 (94 aa).

The signal sequence occupies residues 1-22 (MASLKKSLFLVLFLGLVSLSIC). Residues 23-46 (EEEKRENEEDAEDENHEEESEEKR) constitute a propeptide that is removed on maturation. A disordered region spans residues 27 to 46 (RENEEDAEDENHEEESEEKR). The segment covering 30 to 42 (EEDAEDENHEEES) has biased composition (acidic residues). Leucine 62 is modified (leucine amide). A propeptide spanning residues 66–70 (SEEKR) is cleaved from the precursor. A Methionine amide modification is found at methionine 75. The propeptide occupies 79-83 (SEEKR). A Methionine amide modification is found at methionine 88. A propeptide spanning residues 92-94 (SEE) is cleaved from the precursor.

It belongs to the frog skin active peptide (FSAP) family. Brevinin subfamily. As to expression, expressed by the skin glands.

Its subcellular location is the secreted. Fallaxidin-1.3 shows no antibacterial activity against Gram-positive or Gram-negative bacteria. Does not inhibit the formation of NO by neuronal nitric oxide synthase. Has no effect on splenocyte proliferation or smooth muscle contraction. Functionally, fallaxidin-3.2 shows antibacterial activity against the Gram-positive bacteria E.faecalis (MIC=100 uM) and L.lactis (MIC=500 uM). No antibacterial activity against the Gram-positive bacteria B.cereus, L.innocua, M.luteus, S.epidermidis, S.uberis and S.aureus, or the Gram-negative bacteria E.cloacae and E.coli. This chain is Preprofallaxidin-9, found in Litoria fallax (Eastern dwarf tree frog).